A 387-amino-acid polypeptide reads, in one-letter code: Type 2 DNA topoisomerase 6 subunit A (387 aa).

Residues 12–160 (EARKKALAVF…MLILSKEKGK (149 aa)) form the Topo IIA-type catalytic domain. Y106 functions as the O-(5'-phospho-DNA)-tyrosine intermediate in the catalytic mechanism. Mg(2+) is bound by residues E207 and D259.

It belongs to the TOP6A family. Homodimer. Heterotetramer of two Top6A and two Top6B chains. Mg(2+) serves as cofactor.

The catalysed reaction is ATP-dependent breakage, passage and rejoining of double-stranded DNA.. Functionally, relaxes both positive and negative superturns and exhibits a strong decatenase activity. This is Type 2 DNA topoisomerase 6 subunit A from Hyperthermus butylicus (strain DSM 5456 / JCM 9403 / PLM1-5).